Here is a 63-residue protein sequence, read N- to C-terminus: Large ribosomal subunit protein bL32 (63 aa).

Disordered regions lie at residues 1-25 (MAVP…LTTP) and 42-63 (VSPK…QNND). The span at 7-20 (KTSKQKKRSRRGHI) shows a compositional bias: basic residues. Residues 54-63 (ANENKQQNND) show a composition bias toward polar residues.

It belongs to the bacterial ribosomal protein bL32 family.

This is Large ribosomal subunit protein bL32 from Lactobacillus johnsonii (strain CNCM I-12250 / La1 / NCC 533).